A 111-amino-acid polypeptide reads, in one-letter code: uncharacterized protein (111 aa).

The stretch at 3–29 (RKITSYKTSLQGLREENEDVELMNLNL) forms a coiled coil. Residues 6–111 (TSYKTSLQGL…TWWMYCSSYY (106 aa)) form the PPM-type phosphatase domain.

This is an uncharacterized protein from Acanthamoeba polyphaga mimivirus (APMV).